The sequence spans 326 residues: UDP-N-acetylglucosamine transporter (326 aa).

Helical transmembrane passes span 4–24 (NLKY…VLTM), 38–58 (LSST…IFLV), 136–156 (LGVY…FVQW), 174–194 (FVGL…GVYF), 212–232 (LGFF…GELV), 243–263 (QLTW…AAVI), 269–289 (ILKG…SYFW), and 293–313 (FVPT…TFLY).

This sequence belongs to the nucleotide-sugar transporter family. SLC35A subfamily. As to quaternary structure, interacts with SLC35A2; the interaction is reduced in the presence of SLC35A4. Found in a complex with SLC35A2 and SLC35A4. Interacts with MGAT4B. O-Glcnacylation regulates the stability of SLC35A3 and the specific complex formation with MGAT4B.

It is found in the golgi apparatus membrane. It carries out the reaction UMP(out) + UDP-N-acetyl-alpha-D-glucosamine(in) = UMP(in) + UDP-N-acetyl-alpha-D-glucosamine(out). Transports diphosphate-N-acetylglucosamine (UDP-GlcNAc) from the cytosol into the lumen of the Golgi apparatus, functioning as an antiporter that exchanges UDP-N-acetyl-alpha-D-glucosamine for UMP. May supply UDP-GlcNAc as substrate for Golgi-resident glycosyltransferases that generate highly branched, multiantennary complex N-glycans and keratan sulfate. However, the exact role of SLC35A3 still needs to be elucidated, it could be a member of a catalytically more efficient multiprotein complex rather than function independently as a single transporter. The protein is UDP-N-acetylglucosamine transporter (Slc35a3) of Mus musculus (Mouse).